Consider the following 360-residue polypeptide: Peptide chain release factor 1 (360 aa).

At glutamine 236 the chain carries N5-methylglutamine.

The protein belongs to the prokaryotic/mitochondrial release factor family. Methylated by PrmC. Methylation increases the termination efficiency of RF1.

Its subcellular location is the cytoplasm. In terms of biological role, peptide chain release factor 1 directs the termination of translation in response to the peptide chain termination codons UAG and UAA. This is Peptide chain release factor 1 from Limosilactobacillus fermentum (strain NBRC 3956 / LMG 18251) (Lactobacillus fermentum).